The following is a 502-amino-acid chain: MTRPVLVLVHGWGCDSRTWQPVLDGLRELVPVQLVDLPGFGNTPALETFSLPAVLAAIESQLPERCVLLGWSLGAMLAVQLAARLPQQVLGVISLAANARFVASDDYPHAMAPDVNRQFNSRFAEQPQAALKMFTGLLAQGDVQERALLKQLRTQVPDAINHNWAQALQLLAELDNRAALVQLSQPLLHLLAEQDALVPIAAAESLRGLNSQHQIHVIAGSAHAVHWSQPQQLISAVQDFYETLATAVDKKRVAQSFGKAAATYDSVAGLQRAVGAQLLDYLPAQLDRTRLLDIGSGTGFFTAQLATRGAEVIALDIAQGMLDFARQQHPQAADWVCGDAENLPFAQSSVDFIFSSLVIQWCARVPQLMQELARVLKPGGRAYISTLGPGTLVELKRAWQQVDNYVHVNRFVGRTSLEQAVQQAGMQCLAFVESTRRLYFSRLRDLTHELKALGAHNINPGQAQGLTGRQRLQAFSLAYERERSPQGLPASYEVYYLVLCKP.

Residues 1–224 (MTRPVLVLVH…IHVIAGSAHA (224 aa)) are carboxylesterase. Trp12 lines the substrate pocket. Ser72 acts as the Nucleophile in catalysis. A substrate-binding site is contributed by 134 to 138 (FTGLL). Active-site residues include Asp195 and His223. His223 is a binding site for substrate. The malonyl-ACP O-methyltransferase stretch occupies residues 225-502 (VHWSQPQQLI…EVYYLVLCKP (278 aa)).

This sequence in the N-terminal section; belongs to the AB hydrolase superfamily. Carboxylesterase BioH family. The protein in the C-terminal section; belongs to the methyltransferase superfamily.

The enzyme catalyses a carboxylic ester + H2O = an alcohol + a carboxylate + H(+). It catalyses the reaction malonyl-[ACP] + S-adenosyl-L-methionine = malonyl-[ACP] methyl ester + S-adenosyl-L-homocysteine. It functions in the pathway cofactor biosynthesis; biotin biosynthesis. Its function is as follows. Converts the free carboxyl group of a malonyl-thioester to its methyl ester by transfer of a methyl group from S-adenosyl-L-methionine (SAM). It allows to synthesize pimeloyl-ACP via the fatty acid synthetic pathway. In terms of biological role, the physiological role of BioH is to remove the methyl group introduced by BioC when the pimeloyl moiety is complete. It allows to synthesize pimeloyl-ACP via the fatty acid synthetic pathway through the hydrolysis of the ester bonds of pimeloyl-ACP esters. The sequence is that of Biotin biosynthesis bifunctional protein BioHC (bioC) from Cellvibrio japonicus (strain Ueda107) (Pseudomonas fluorescens subsp. cellulosa).